A 164-amino-acid polypeptide reads, in one-letter code: 17.8 kDa class II heat shock protein (164 aa).

The sHSP domain maps to 48-164; it reads DARAMAATPA…KPKTIEVKVA (117 aa).

It belongs to the small heat shock protein (HSP20) family.

The protein localises to the cytoplasm. This is 17.8 kDa class II heat shock protein from Zea mays (Maize).